Here is a 347-residue protein sequence, read N- to C-terminus: 4-hydroxy-2-oxovalerate aldolase 2 (347 aa).

The Pyruvate carboxyltransferase domain occupies 7 to 259 (VRITDTSLRD…KTGIDFFDIA (253 aa)). 15-16 (RD) lines the substrate pocket. A Mn(2+)-binding site is contributed by Asp16. The active-site Proton acceptor is His19. Substrate-binding residues include Ser169 and His198. Mn(2+) contacts are provided by His198 and His200. Tyr289 contributes to the substrate binding site.

Belongs to the 4-hydroxy-2-oxovalerate aldolase family.

It carries out the reaction (S)-4-hydroxy-2-oxopentanoate = acetaldehyde + pyruvate. The sequence is that of 4-hydroxy-2-oxovalerate aldolase 2 from Mycobacterium marinum (strain ATCC BAA-535 / M).